The sequence spans 1025 residues: Complement receptor type 2 (1025 aa).

The signal sequence occupies residues Met-1 to Glu-11. The Sushi 1 domain maps to Ile-12–Ser-75. Topologically, residues Ile-12 to Trp-963 are extracellular. 2 disulfides stabilise this stretch: Cys-14/Cys-56 and Cys-42/Cys-73. N-linked (GlcNAc...) asparagine glycosylation is found at Asn-77 and Asn-113. Sushi domains follow at residues Ile-80 to Ser-140, Leu-144 to Glu-204, Ala-205 to Glu-265, Ile-266 to Leu-336, Val-341 to Lys-400, Gly-401 to Val-460, Ala-461 to Glu-516, Ile-517 to Leu-587, Val-592 to Lys-651, Glu-652 to Val-706, Ile-707 to Gln-771, Thr-776 to Arg-835, Leu-839 to Glu-899, and Val-900 to Tyr-960. 26 disulfides stabilise this stretch: Cys-82-Cys-124, Cys-110-Cys-138, Cys-146-Cys-189, Cys-175-Cys-202, Cys-207-Cys-248, Cys-234-Cys-263, Cys-268-Cys-317, Cys-297-Cys-334, Cys-343-Cys-385, Cys-371-Cys-398, Cys-402-Cys-445, Cys-431-Cys-458, Cys-463-Cys-501, Cys-487-Cys-514, Cys-519-Cys-568, Cys-548-Cys-585, Cys-594-Cys-636, Cys-622-Cys-649, Cys-654-Cys-689, Cys-675-Cys-704, Cys-709-Cys-752, Cys-738-Cys-769, Cys-778-Cys-820, Cys-806-Cys-833, Cys-841-Cys-884, and Cys-870-Cys-897. N-linked (GlcNAc...) asparagine glycans are attached at residues Asn-276, Asn-316, Asn-364, and Asn-380. Asn-484 is a glycosylation site (N-linked (GlcNAc...) asparagine). Asn-527 carries an N-linked (GlcNAc...) asparagine glycan. N-linked (GlcNAc...) asparagine glycans are attached at residues Asn-615 and Asn-639. The N-linked (GlcNAc...) asparagine glycan is linked to Asn-694. 5 N-linked (GlcNAc...) asparagine glycosylation sites follow: Asn-754, Asn-790, Asn-813, Asn-823, and Asn-851. Asn-901 carries an N-linked (GlcNAc...) asparagine glycan. 2 disulfide bridges follow: Cys-902/Cys-945 and Cys-931/Cys-958. A helical transmembrane segment spans residues Ser-964–Leu-990. The Cytoplasmic portion of the chain corresponds to Lys-991–Ser-1025.

Belongs to the receptors of complement activation (RCA) family. Interacts (via Sushi domain 1 and 2) with C3. Interacts with CD19. Part of a complex composed of CD19, CR2/CD21, CD81 and IFITM1/CD225 in the membrane of mature B-cells. Interacts (via Sushi domain 1 and 2) with FCER2 (via the C-terminus). Interacts with CD23. Interacts with FCRL5. Interacts with CR1. Interacts with INFNA1. In terms of tissue distribution, B-lymphocytes.

The protein resides in the cell membrane. Functionally, serves as a receptor for various ligands including complement component CD3d, HNRNPU OR IFNA1. When C3d is bound to antigens, attaches to C3d on B-cell surface and thereby facilitates the recognition and uptake of antigens by B-cells. This interaction enhances B-cell activation and subsequent immune responses. Forms a complex with several partners on the surface of B-cells including CD19, FCRL5 and CD81, to form the B-cell coreceptor complex that plays a crucial role in B-cell activation and signaling. Also induces specific intracellular signaling separately from the BCR and CD19 by activating the tyrosine kinase SRC, which then phosphorylates nucleolin/NCL and triggers AKT and GSK3 kinase activities in a SYK/CD19-independent manner. Acts as a ligand for CD23 (FcepsilonRII), a low-affinity receptor for IgE, which is expressed on B-cells and other immune cells, and thus participates in the regulation of IgE production. The protein is Complement receptor type 2 (Cr2) of Mus musculus (Mouse).